Reading from the N-terminus, the 333-residue chain is Oxidoreductase AN1596 (333 aa).

The protein belongs to the NmrA-type oxidoreductase family.

Its pathway is secondary metabolite biosynthesis; terpenoid biosynthesis. Its function is as follows. Oxidoreductase; part of the gene cluster that mediates the biosynthesis of the diterpene ent-pimara-8(14),15-diene (PD). Within the cluster, the HMG-CoA reductase AN1593 functions in the mevalonate pathway, which produces isoprenoid precursors. The geranylgeranyl pyrophosphate (GGPP) synthase AN1592 is needed in the formation of GGPP, the precursor for diterpenes. Lastly, the pimaradiene synthase pbcA performs the 2 cyclization steps that convert GGPP to ent-pimara-8(14),15-diene. The putative roles of the remaining cluster enzymes in ent-pimara-8(14),15-diene biosynthesis is unclear. The cytochrome P450 monooxygenase AN1598, the glutathione S-transferase AN1595, the oxidoreductases AN1596 and AN1597 probably function as decorative enzymes. It is possible that in biological conditions the compound is oxidized to ent-pimara-8(14),15-dien-19-oic acid, which is a bioactive diterpene compound predominant in many plant extracts. The sequence is that of Oxidoreductase AN1596 from Emericella nidulans (strain FGSC A4 / ATCC 38163 / CBS 112.46 / NRRL 194 / M139) (Aspergillus nidulans).